Reading from the N-terminus, the 291-residue chain is Dihydroorotate dehydrogenase A (fumarate) (291 aa).

FMN-binding positions include Ser18 and 42 to 43; that span reads KS. Substrate-binding positions include Lys42, 66-70, and Asn126; that span reads NAVGL. Asn126 provides a ligand contact to FMN. Residue Cys129 is the Nucleophile of the active site. 2 residues coordinate FMN: Lys164 and Ile190. Position 191 to 192 (191 to 192) interacts with substrate; it reads NT. FMN-binding positions include Gly216, 242-243, and 264-265; these read GG and GS.

The protein belongs to the dihydroorotate dehydrogenase family. Type 1 subfamily. As to quaternary structure, homodimer. The cofactor is FMN.

The protein localises to the cytoplasm. The enzyme catalyses (S)-dihydroorotate + fumarate = orotate + succinate. It functions in the pathway pyrimidine metabolism; UMP biosynthesis via de novo pathway. Functionally, catalyzes the conversion of dihydroorotate to orotate with fumarate as the electron acceptor. In Lacticaseibacillus paracasei (strain ATCC 334 / BCRC 17002 / CCUG 31169 / CIP 107868 / KCTC 3260 / NRRL B-441) (Lactobacillus paracasei), this protein is Dihydroorotate dehydrogenase A (fumarate) (pyrD).